Consider the following 129-residue polypeptide: Small ribosomal subunit protein uS11 (129 aa).

This sequence belongs to the universal ribosomal protein uS11 family. Part of the 30S ribosomal subunit. Interacts with proteins S7 and S18. Binds to IF-3.

Located on the platform of the 30S subunit, it bridges several disparate RNA helices of the 16S rRNA. Forms part of the Shine-Dalgarno cleft in the 70S ribosome. The sequence is that of Small ribosomal subunit protein uS11 from Nitratidesulfovibrio vulgaris (strain DSM 19637 / Miyazaki F) (Desulfovibrio vulgaris).